A 141-amino-acid polypeptide reads, in one-letter code: Large-conductance mechanosensitive channel (141 aa).

Transmembrane regions (helical) follow at residues Val14 to Leu34, Ile38 to Gly58, and Gly81 to Val101.

This sequence belongs to the MscL family. In terms of assembly, homopentamer.

It is found in the cell inner membrane. Its function is as follows. Channel that opens in response to stretch forces in the membrane lipid bilayer. May participate in the regulation of osmotic pressure changes within the cell. This is Large-conductance mechanosensitive channel from Rhizobium rhizogenes (strain K84 / ATCC BAA-868) (Agrobacterium radiobacter).